The following is a 95-amino-acid chain: Large ribosomal subunit protein bL25 (95 aa).

This sequence belongs to the bacterial ribosomal protein bL25 family. In terms of assembly, part of the 50S ribosomal subunit; part of the 5S rRNA/L5/L18/L25 subcomplex. Contacts the 5S rRNA. Binds to the 5S rRNA independently of L5 and L18.

Its function is as follows. This is one of the proteins that binds to the 5S RNA in the ribosome where it forms part of the central protuberance. The protein is Large ribosomal subunit protein bL25 of Shewanella loihica (strain ATCC BAA-1088 / PV-4).